We begin with the raw amino-acid sequence, 196 residues long: Large ribosomal subunit protein bL9 (196 aa).

The disordered stretch occupies residues 172–196 (NESARPEAFFDPEAEIEQEEGEENA). Residues 181-196 (FDPEAEIEQEEGEENA) show a composition bias toward acidic residues.

It belongs to the bacterial ribosomal protein bL9 family.

Functionally, binds to the 23S rRNA. The chain is Large ribosomal subunit protein bL9 from Chelativorans sp. (strain BNC1).